The sequence spans 338 residues: Biotin synthase (338 aa).

Residues 46 to 270 (NEVQLSTLLS…VAVARITMPA (225 aa)) form the Radical SAM core domain. Residues cysteine 61, cysteine 65, and cysteine 68 each coordinate [4Fe-4S] cluster. Cysteine 105, cysteine 136, cysteine 196, and arginine 274 together coordinate [2Fe-2S] cluster.

The protein belongs to the radical SAM superfamily. Biotin synthase family. In terms of assembly, homodimer. Requires [4Fe-4S] cluster as cofactor. [2Fe-2S] cluster serves as cofactor.

The catalysed reaction is (4R,5S)-dethiobiotin + (sulfur carrier)-SH + 2 reduced [2Fe-2S]-[ferredoxin] + 2 S-adenosyl-L-methionine = (sulfur carrier)-H + biotin + 2 5'-deoxyadenosine + 2 L-methionine + 2 oxidized [2Fe-2S]-[ferredoxin]. The protein operates within cofactor biosynthesis; biotin biosynthesis; biotin from 7,8-diaminononanoate: step 2/2. In terms of biological role, catalyzes the conversion of dethiobiotin (DTB) to biotin by the insertion of a sulfur atom into dethiobiotin via a radical-based mechanism. In Rhizorhabdus wittichii (strain DSM 6014 / CCUG 31198 / JCM 15750 / NBRC 105917 / EY 4224 / RW1) (Sphingomonas wittichii), this protein is Biotin synthase.